The chain runs to 365 residues: 3-dehydroquinate synthase (365 aa).

NAD(+) is bound by residues 75–80 (DAESGK), 109–113 (GAATD), 133–134 (TT), K146, and K155. E188, H253, and H269 together coordinate Zn(2+).

This sequence belongs to the sugar phosphate cyclases superfamily. Dehydroquinate synthase family. NAD(+) is required as a cofactor. Co(2+) serves as cofactor. Requires Zn(2+) as cofactor.

It is found in the cytoplasm. The catalysed reaction is 7-phospho-2-dehydro-3-deoxy-D-arabino-heptonate = 3-dehydroquinate + phosphate. It functions in the pathway metabolic intermediate biosynthesis; chorismate biosynthesis; chorismate from D-erythrose 4-phosphate and phosphoenolpyruvate: step 2/7. Its function is as follows. Catalyzes the conversion of 3-deoxy-D-arabino-heptulosonate 7-phosphate (DAHP) to dehydroquinate (DHQ). The protein is 3-dehydroquinate synthase of Corynebacterium efficiens (strain DSM 44549 / YS-314 / AJ 12310 / JCM 11189 / NBRC 100395).